A 132-amino-acid chain; its full sequence is MAAPKQAARKPRRRDRKSVPVGQAHIKSTFNNTIISITDPSGAVVSWASGGDVGFKGSRKSTPYAAGMAAESAARKAMEHGVKKVDVFVKGPGSGRETAIRSLQSAGLEVGSITDVTPQAHNGVRPPKRRRV.

The disordered stretch occupies residues M1–A24. The segment covering A7 to R16 has biased composition (basic residues).

This sequence belongs to the universal ribosomal protein uS11 family. As to quaternary structure, part of the 30S ribosomal subunit. Interacts with proteins S7 and S18. Binds to IF-3.

In terms of biological role, located on the platform of the 30S subunit, it bridges several disparate RNA helices of the 16S rRNA. Forms part of the Shine-Dalgarno cleft in the 70S ribosome. This Bifidobacterium longum (strain DJO10A) protein is Small ribosomal subunit protein uS11.